The sequence spans 353 residues: Ribosomal RNA large subunit methyltransferase M (353 aa).

Residues S183, 216 to 219 (APGG), D235, D255, and D271 each bind S-adenosyl-L-methionine. The active-site Proton acceptor is the K300.

The protein belongs to the class I-like SAM-binding methyltransferase superfamily. RNA methyltransferase RlmE family. RlmM subfamily. As to quaternary structure, monomer.

The protein localises to the cytoplasm. The enzyme catalyses cytidine(2498) in 23S rRNA + S-adenosyl-L-methionine = 2'-O-methylcytidine(2498) in 23S rRNA + S-adenosyl-L-homocysteine + H(+). Catalyzes the 2'-O-methylation at nucleotide C2498 in 23S rRNA. This is Ribosomal RNA large subunit methyltransferase M from Azotobacter vinelandii (strain DJ / ATCC BAA-1303).